We begin with the raw amino-acid sequence, 348 residues long: Ribonuclease H (348 aa).

Residues 54–65 (NTTSNYGSSTHA) are compositionally biased toward polar residues. The disordered stretch occupies residues 54–81 (NTTSNYGSSTHAGGQVSKPHTTQKRVHR). The region spanning 184–346 (YNKSMNVYCD…ADFLAKKGAS (163 aa)) is the RNase H type-1 domain. Asp193, Glu235, Asp264, and Asp338 together coordinate Mg(2+).

It belongs to the RNase H family. It depends on Mg(2+) as a cofactor.

It catalyses the reaction Endonucleolytic cleavage to 5'-phosphomonoester.. Its function is as follows. Endonuclease that specifically degrades the RNA of RNA-DNA hybrids. The protein is Ribonuclease H (RNH1) of Saccharomyces cerevisiae (strain ATCC 204508 / S288c) (Baker's yeast).